Here is a 966-residue protein sequence, read N- to C-terminus: Receptor protein-tyrosine kinase CEPR1 (966 aa).

Residues 1 to 22 (MRLKNFPFFVLFFFFCFNSNQS) form the signal peptide. Residues 23–592 (WGLMSSNQQP…QEPHGKKKLS (570 aa)) lie on the Extracellular side of the membrane. Residue N61 is glycosylated (N-linked (GlcNAc...) asparagine). 20 LRR repeats span residues 70 to 94 (QGLV…VCSY), 95 to 120 (FPNL…TIPN), 122 to 144 (SLLR…FSQM), 145 to 168 (KSLR…IFNL), 170 to 194 (DLEY…VSKL), 195 to 218 (TKLT…IGNL), 219 to 242 (TSLV…IGNL), 245 to 267 (LRQL…IGNL), 268 to 291 (KNLT…ICSL), 292 to 315 (PNLR…LGNS), 317 to 339 (TLKI…LGSS), 341 to 363 (PMIA…VCKS), 365 to 386 (KLLY…TYGS), 387 to 411 (CKTL…VMSL), 412 to 435 (PHVS…IGNA), 437 to 459 (NLSE…LSHS), 460 to 483 (TNLV…VGRL), 484 to 507 (RKLN…LSNL), 508 to 531 (KSLN…LSEL), and 533 to 554 (PTSI…LIRG). N109, N120, N128, and N167 each carry an N-linked (GlcNAc...) asparagine glycan. Residues N217 and N241 are each glycosylated (N-linked (GlcNAc...) asparagine). 2 N-linked (GlcNAc...) asparagine glycosylation sites follow: N269 and N301. N-linked (GlcNAc...) asparagine glycosylation is present at N437. N-linked (GlcNAc...) asparagine glycosylation is found at N527 and N537. Residues 593-613 (SIWAILVSVFILVLGVIMFYL) form a helical membrane-spanning segment. Over 614-966 (RQRMSKNRAV…VSDHLTQTRL (353 aa)) the chain is Cytoplasmic. In terms of domain architecture, Protein kinase spans 656-934 (LVDKNIVGHG…TMNEVVQLLI (279 aa)). ATP-binding positions include 662-670 (VGHGGSGTV) and K684. 2 positions are modified to phosphotyrosine: Y738 and Y775. Residue D788 is the Proton acceptor of the active site. Residues Y831 and Y838 each carry the phosphotyrosine modification. Residues 937 to 966 (TPQGGPDMTSKPTTKIKDSIVSDHLTQTRL) are disordered.

This sequence belongs to the protein kinase superfamily. Ser/Thr protein kinase family. As to quaternary structure, interacts with the root-derived peptides CEP1, CEP3 and CEP5. Expressed in the vasculature, especially in phloem and procambium regions, of stems, leaves, cotyledons, sepals, pedals, pedicels, hypocotyls and roots (in primary and lateral roots, but not in root tips). Expressed in the root from the basal meristem onward. Present in the phloem pole pericycle and in the adjacent phloem.

Its subcellular location is the cell membrane. It carries out the reaction L-tyrosyl-[protein] + ATP = O-phospho-L-tyrosyl-[protein] + ADP + H(+). In terms of biological role, receptor kinase involved in the perception of C-terminally encoded plant signaling peptide (CEP) and subsequent regulation of root and shoot development. Required for xylem and phloem cell files morphology and organization, probably by preventing ectopic lignification in phloem cells. Together with CEPR2, mediates systemic nitrogen (N)-demand signaling upon the perception of root-derived peptides (e.g. CEP1) via the up-regulation of genes involved in N uptake and assimilation pathways. Positively regulates lateral root initiation and development; probably repressed by the signaling peptide CEP5. The polypeptide is Receptor protein-tyrosine kinase CEPR1 (Arabidopsis thaliana (Mouse-ear cress)).